The primary structure comprises 152 residues: Ribosomal RNA large subunit methyltransferase H (152 aa).

S-adenosyl-L-methionine is bound by residues L68, G100, and 119–124 (FGRMTW).

It belongs to the RNA methyltransferase RlmH family. Homodimer.

The protein localises to the cytoplasm. The catalysed reaction is pseudouridine(1915) in 23S rRNA + S-adenosyl-L-methionine = N(3)-methylpseudouridine(1915) in 23S rRNA + S-adenosyl-L-homocysteine + H(+). Functionally, specifically methylates the pseudouridine at position 1915 (m3Psi1915) in 23S rRNA. In Paramagnetospirillum magneticum (strain ATCC 700264 / AMB-1) (Magnetospirillum magneticum), this protein is Ribosomal RNA large subunit methyltransferase H.